The chain runs to 238 residues: Protein shisa-3 homolog (238 aa).

Positions 1–21 (MGALLAFCLLVGLLRWGPAGA) are cleaved as a signal peptide. Residues 22–98 (QQPGEYCHGW…GITAQPVYVP (77 aa)) are Lumenal-facing. A helical membrane pass occupies residues 99-119 (FLIVGSIFIAFIILGSLVAIY). Over 120–238 (CCTCLRPKEP…GKSCPDFSSS (119 aa)) the chain is Cytoplasmic.

Belongs to the shisa family.

The protein localises to the endoplasmic reticulum membrane. Plays an essential role in the maturation of presomitic mesoderm cells by individual attenuation of both FGF and WNT signaling. This chain is Protein shisa-3 homolog (Shisa3), found in Mus musculus (Mouse).